The primary structure comprises 314 residues: Glutathione synthetase (314 aa).

In terms of domain architecture, ATP-grasp spans 125-309 (KLFVMNFPQL…VAAKVWDTIE (185 aa)). 151–207 (RDKHGAVVMKPLHGHGGAAVFRVMPQDMNFGSLFDMFTVTFKEPWVIQQFIPEVKHG) lines the ATP pocket. Glutamate 280 and asparagine 282 together coordinate Mg(2+).

The protein belongs to the prokaryotic GSH synthase family. The cofactor is Mg(2+). Requires Mn(2+) as cofactor.

It carries out the reaction gamma-L-glutamyl-L-cysteine + glycine + ATP = glutathione + ADP + phosphate + H(+). Its pathway is sulfur metabolism; glutathione biosynthesis; glutathione from L-cysteine and L-glutamate: step 2/2. In Bradyrhizobium diazoefficiens (strain JCM 10833 / BCRC 13528 / IAM 13628 / NBRC 14792 / USDA 110), this protein is Glutathione synthetase.